Here is a 269-residue protein sequence, read N- to C-terminus: Phosphonoacetaldehyde hydrolase (269 aa).

Catalysis depends on Asp-10, which acts as the Nucleophile. Residues Asp-10 and Ala-12 each contribute to the Mg(2+) site. The active-site Schiff-base intermediate with substrate is Lys-52. Asp-186 serves as a coordination point for Mg(2+).

The protein belongs to the HAD-like hydrolase superfamily. PhnX family. Homodimer. The cofactor is Mg(2+).

The enzyme catalyses phosphonoacetaldehyde + H2O = acetaldehyde + phosphate + H(+). Functionally, involved in phosphonate degradation. This is Phosphonoacetaldehyde hydrolase from Salmonella paratyphi A (strain ATCC 9150 / SARB42).